We begin with the raw amino-acid sequence, 276 residues long: Dermonecrotic toxin LlSicTox-alphaIV2ii (276 aa).

Histidine 5 is an active-site residue. Residues glutamate 25 and aspartate 27 each contribute to the Mg(2+) site. The active-site Nucleophile is the histidine 41. Disulfide bonds link cysteine 45-cysteine 51 and cysteine 47-cysteine 193. A Mg(2+)-binding site is contributed by aspartate 85.

This sequence belongs to the arthropod phospholipase D family. Class II subfamily. Mg(2+) is required as a cofactor. As to expression, expressed by the venom gland.

It is found in the secreted. It carries out the reaction an N-(acyl)-sphingosylphosphocholine = an N-(acyl)-sphingosyl-1,3-cyclic phosphate + choline. It catalyses the reaction an N-(acyl)-sphingosylphosphoethanolamine = an N-(acyl)-sphingosyl-1,3-cyclic phosphate + ethanolamine. The enzyme catalyses a 1-acyl-sn-glycero-3-phosphocholine = a 1-acyl-sn-glycero-2,3-cyclic phosphate + choline. The catalysed reaction is a 1-acyl-sn-glycero-3-phosphoethanolamine = a 1-acyl-sn-glycero-2,3-cyclic phosphate + ethanolamine. Its function is as follows. Dermonecrotic toxins cleave the phosphodiester linkage between the phosphate and headgroup of certain phospholipids (sphingolipid and lysolipid substrates), forming an alcohol (often choline) and a cyclic phosphate. This toxin acts on sphingomyelin (SM). It may also act on ceramide phosphoethanolamine (CPE), lysophosphatidylcholine (LPC) and lysophosphatidylethanolamine (LPE), but not on lysophosphatidylserine (LPS), and lysophosphatidylglycerol (LPG). It acts by transphosphatidylation, releasing exclusively cyclic phosphate products as second products. Induces dermonecrosis, hemolysis, increased vascular permeability, edema, inflammatory response, and platelet aggregation. This is Dermonecrotic toxin LlSicTox-alphaIV2ii from Loxosceles laeta (South American recluse spider).